Here is a 124-residue protein sequence, read N- to C-terminus: Colorectal cancer-associated protein 1 (124 aa).

Residues 77–97 (LYGCFCVGLVSGMAISVLLLA) traverse the membrane as a helical segment.

In terms of tissue distribution, expressed in gastrointestinal and immune tissue, as well as prostate, testis and ovary. Expressed in lamina propria and eosinophils but not in epithelial cells. Expression is greater in benign adjacent tissues than in colon tumors.

Its subcellular location is the membrane. The sequence is that of Colorectal cancer-associated protein 1 (COLCA1) from Homo sapiens (Human).